The primary structure comprises 124 residues: Large ribosomal subunit protein bL12 (124 aa).

Positions 94–124 are disordered; that stretch reads APKPVKESVPKAAAEEAKKKLEEAGAKAEIK.

It belongs to the bacterial ribosomal protein bL12 family. As to quaternary structure, homodimer. Part of the ribosomal stalk of the 50S ribosomal subunit. Forms a multimeric L10(L12)X complex, where L10 forms an elongated spine to which 2 to 4 L12 dimers bind in a sequential fashion. Binds GTP-bound translation factors.

In terms of biological role, forms part of the ribosomal stalk which helps the ribosome interact with GTP-bound translation factors. Is thus essential for accurate translation. The sequence is that of Large ribosomal subunit protein bL12 from Paraburkholderia phytofirmans (strain DSM 17436 / LMG 22146 / PsJN) (Burkholderia phytofirmans).